Consider the following 320-residue polypeptide: Cytochrome f (320 aa).

The signal sequence occupies residues 1 to 35 (MQNRNTFSWVKEQMTRFISVSIMIYVITRTSIANA). Tyr-36, Cys-56, Cys-59, and His-60 together coordinate heme. The chain crosses the membrane as a helical span at residues 286-306 (VQGLLFFLASVILAQIFLVLK).

It belongs to the cytochrome f family. In terms of assembly, the 4 large subunits of the cytochrome b6-f complex are cytochrome b6, subunit IV (17 kDa polypeptide, petD), cytochrome f and the Rieske protein, while the 4 small subunits are PetG, PetL, PetM and PetN. The complex functions as a dimer. The cofactor is heme.

It is found in the plastid. It localises to the chloroplast thylakoid membrane. Component of the cytochrome b6-f complex, which mediates electron transfer between photosystem II (PSII) and photosystem I (PSI), cyclic electron flow around PSI, and state transitions. This chain is Cytochrome f, found in Acorus calamus (Sweet flag).